We begin with the raw amino-acid sequence, 337 residues long: Putative high mobility group B protein 11 (337 aa).

Positions 34 to 125 (VRNPELFWEM…MLFEFEHLYY (92 aa)) constitute an ARID domain. Disordered regions lie at residues 197–221 (TKRGKKKAKSSQGDSHKPPKRQRTG) and 298–337 (AGTSASAAETADEASQENLAKTDACTSASSAAETEDEVSQ). The HMG box DNA-binding region spans 215 to 282 (PKRQRTGYNF…RYKMEILQYR (68 aa)). The segment covering 319-329 (TDACTSASSAA) has biased composition (low complexity).

The protein belongs to the HMGB family.

Its subcellular location is the nucleus. Binds preferentially DNA with A/T-rich content. This is Putative high mobility group B protein 11 (HMGB11) from Arabidopsis thaliana (Mouse-ear cress).